A 197-amino-acid chain; its full sequence is uncharacterized protein (197 aa).

Residues 1-135 (MKTPWKFLAR…ERGKRANARV (135 aa)) are disordered. Over residues 14 to 32 (RQPSGKTQESSAGNDTGSK) the composition is skewed to polar residues. Residues 83–96 (IHADEAQTTARDEA) are compositionally biased toward basic and acidic residues. Positions 116-132 (SQRKPRIKRRERGKRAN) are enriched in basic residues.

This sequence to Rhizobium NGR234A y4nF and y4aO.

This is an uncharacterized protein from Rhizobium meliloti (strain 1021) (Ensifer meliloti).